We begin with the raw amino-acid sequence, 425 residues long: UDP-N-acetylglucosamine 1-carboxyvinyltransferase (425 aa).

Phosphoenolpyruvate is bound at residue Lys23–Asn24. UDP-N-acetyl-alpha-D-glucosamine is bound at residue Arg100. Catalysis depends on Cys124, which acts as the Proton donor. Cys124 bears the 2-(S-cysteinyl)pyruvic acid O-phosphothioketal mark. The UDP-N-acetyl-alpha-D-glucosamine site is built by Asp313 and Ile335.

Belongs to the EPSP synthase family. MurA subfamily.

It localises to the cytoplasm. It carries out the reaction phosphoenolpyruvate + UDP-N-acetyl-alpha-D-glucosamine = UDP-N-acetyl-3-O-(1-carboxyvinyl)-alpha-D-glucosamine + phosphate. It functions in the pathway cell wall biogenesis; peptidoglycan biosynthesis. Its function is as follows. Cell wall formation. Adds enolpyruvyl to UDP-N-acetylglucosamine. The chain is UDP-N-acetylglucosamine 1-carboxyvinyltransferase from Wolbachia sp. subsp. Drosophila simulans (strain wRi).